Here is a 453-residue protein sequence, read N- to C-terminus: Bifunctional protein GlmU (453 aa).

The tract at residues 1-226 is pyrophosphorylase; sequence MKFSTVILAA…SIEVEGVNDR (226 aa). UDP-N-acetyl-alpha-D-glucosamine contacts are provided by residues 8-11, lysine 22, glutamine 73, 78-79, 100-102, glycine 137, glutamate 151, asparagine 166, and asparagine 224; these read LAAG, GT, and YGD. Position 102 (aspartate 102) interacts with Mg(2+). Asparagine 224 serves as a coordination point for Mg(2+). Positions 227 to 247 are linker; sequence IQLARLERAFQARQAKKLLEQ. The segment at 248 to 453 is N-acetyltransferase; it reads GVMLRDPARF…AGWQRPAKKK (206 aa). UDP-N-acetyl-alpha-D-glucosamine contacts are provided by arginine 330 and lysine 348. The Proton acceptor role is filled by histidine 360. Positions 363 and 374 each coordinate UDP-N-acetyl-alpha-D-glucosamine. Residues alanine 377, 383-384, serine 402, alanine 420, and arginine 437 contribute to the acetyl-CoA site; that span reads NY.

The protein in the N-terminal section; belongs to the N-acetylglucosamine-1-phosphate uridyltransferase family. In the C-terminal section; belongs to the transferase hexapeptide repeat family. Homotrimer. Mg(2+) serves as cofactor.

Its subcellular location is the cytoplasm. The catalysed reaction is alpha-D-glucosamine 1-phosphate + acetyl-CoA = N-acetyl-alpha-D-glucosamine 1-phosphate + CoA + H(+). The enzyme catalyses N-acetyl-alpha-D-glucosamine 1-phosphate + UTP + H(+) = UDP-N-acetyl-alpha-D-glucosamine + diphosphate. It participates in nucleotide-sugar biosynthesis; UDP-N-acetyl-alpha-D-glucosamine biosynthesis; N-acetyl-alpha-D-glucosamine 1-phosphate from alpha-D-glucosamine 6-phosphate (route II): step 2/2. Its pathway is nucleotide-sugar biosynthesis; UDP-N-acetyl-alpha-D-glucosamine biosynthesis; UDP-N-acetyl-alpha-D-glucosamine from N-acetyl-alpha-D-glucosamine 1-phosphate: step 1/1. The protein operates within bacterial outer membrane biogenesis; LPS lipid A biosynthesis. Catalyzes the last two sequential reactions in the de novo biosynthetic pathway for UDP-N-acetylglucosamine (UDP-GlcNAc). The C-terminal domain catalyzes the transfer of acetyl group from acetyl coenzyme A to glucosamine-1-phosphate (GlcN-1-P) to produce N-acetylglucosamine-1-phosphate (GlcNAc-1-P), which is converted into UDP-GlcNAc by the transfer of uridine 5-monophosphate (from uridine 5-triphosphate), a reaction catalyzed by the N-terminal domain. The chain is Bifunctional protein GlmU from Vibrio cholerae serotype O1 (strain ATCC 39541 / Classical Ogawa 395 / O395).